Consider the following 323-residue polypeptide: Small ribosomal subunit protein mS35 (323 aa).

The interval 31 to 59 (PVPTPSLPERTPGNERPPRRKALPPRTEK) is disordered. Residues 257–321 (SSERNILETL…YKESVKRLLN (65 aa)) are a coiled coil.

Belongs to the mitochondrion-specific ribosomal protein mS35 family. Component of the mitochondrial small ribosomal subunit (mt-SSU). Mature mammalian 55S mitochondrial ribosomes consist of a small (28S) and a large (39S) subunit. The 28S small subunit contains a 12S ribosomal RNA (12S mt-rRNA) and 30 different proteins. The 39S large subunit contains a 16S rRNA (16S mt-rRNA), a copy of mitochondrial valine transfer RNA (mt-tRNA(Val)), which plays an integral structural role, and 52 different proteins.

Its subcellular location is the mitochondrion. The chain is Small ribosomal subunit protein mS35 from Homo sapiens (Human).